We begin with the raw amino-acid sequence, 370 residues long: Alpha-ketoglutarate-dependent xanthine dioxygenase xanA (370 aa).

Histidine 107 is a binding site for substrate. Fe cation-binding residues include histidine 149 and aspartate 151. 2-oxoglutarate contacts are provided by threonine 195 and tryptophan 325. A Fe cation-binding site is contributed by histidine 340. A 2-oxoglutarate-binding site is contributed by arginine 352.

This sequence belongs to the TfdA dioxygenase family. Requires Fe(2+) as cofactor. Glycosylated. Is subject to both N- and O-linked glycosylation. Post-translationally, phosphorylated.

It is found in the cytoplasm. It localises to the cytosol. It catalyses the reaction xanthine + 2-oxoglutarate + O2 = urate + succinate + CO2. With respect to regulation, cu(2+) and Zn(2+) completely inhibit the xanthine dioxygenase activity, whereas Co(2+), Mn(2+), and Ni(2+) partially inhibit the activity. The inactive metal ions are presumed to compete for the Fe(2+)-binding site. N-oxalylglycine (NOG), a known inhibitor of several Fe(2+)/alpha-ketoglutarate-dependent dioxygenase family members, competes with alpha-ketoglutarate and provides a Ki of 0.12 uM for inhibition. 6,8-dihydroxypurine acts as a slow-binding competitive inhibitor. The thiol-specific inhibitors 5,5'-dithiobis(2-nitrobenzoic acid) (DTNB) and iodoacetamide, inhibit also the catalytic activity. In terms of biological role, alpha-ketoglutarate-dependent xanthine dioxygenase is a non-heme mononuclear Fe(2+) enzyme that decarboxylates alpha-ketoglutarate to succinate and CO(2) while hydroxylating xanthine to generate uric acid. Allows xanthine utilization as a nitrogen source. Whereas xanA is highly specific for xanthine, alpha-ketoadipic acid can replace alpha-ketoglutarate as a cosubstrate. Exhibits ferroxidase activity in the absence of substrates. This Emericella nidulans (Aspergillus nidulans) protein is Alpha-ketoglutarate-dependent xanthine dioxygenase xanA.